Here is a 240-residue protein sequence, read N- to C-terminus: NAD(P)H-quinone oxidoreductase subunit K (240 aa).

Residues Cys55, Cys56, Cys120, and Cys151 each coordinate [4Fe-4S] cluster.

The protein belongs to the complex I 20 kDa subunit family. In terms of assembly, NDH-1 can be composed of about 15 different subunits; different subcomplexes with different compositions have been identified which probably have different functions. It depends on [4Fe-4S] cluster as a cofactor.

It is found in the cellular thylakoid membrane. It carries out the reaction a plastoquinone + NADH + (n+1) H(+)(in) = a plastoquinol + NAD(+) + n H(+)(out). It catalyses the reaction a plastoquinone + NADPH + (n+1) H(+)(in) = a plastoquinol + NADP(+) + n H(+)(out). Functionally, NDH-1 shuttles electrons from an unknown electron donor, via FMN and iron-sulfur (Fe-S) centers, to quinones in the respiratory and/or the photosynthetic chain. The immediate electron acceptor for the enzyme in this species is believed to be plastoquinone. Couples the redox reaction to proton translocation, and thus conserves the redox energy in a proton gradient. Cyanobacterial NDH-1 also plays a role in inorganic carbon-concentration. The sequence is that of NAD(P)H-quinone oxidoreductase subunit K from Trichodesmium erythraeum (strain IMS101).